The sequence spans 134 residues: Profilin-3 (134 aa).

Residues Cys13 and Cys118 are joined by a disulfide bond. Residues 84–100 carry the Involved in PIP2 interaction motif; the sequence is AVIRGKKGSGGITIKKT. Thr114 is subject to Phosphothreonine.

It belongs to the profilin family. In terms of assembly, occurs in many kinds of cells as a complex with monomeric actin in a 1:1 ratio. In terms of processing, phosphorylated by MAP kinases.

The protein localises to the cytoplasm. Its subcellular location is the cytoskeleton. Its function is as follows. Binds to actin and affects the structure of the cytoskeleton. At high concentrations, profilin prevents the polymerization of actin, whereas it enhances it at low concentrations. The chain is Profilin-3 from Olea europaea (Common olive).